We begin with the raw amino-acid sequence, 735 residues long: Photosystem I P700 chlorophyll a apoprotein A2 (735 aa).

A run of 8 helical transmembrane segments spans residues 46–69, 135–158, 176–200, 274–292, 329–352, 368–394, 416–438, and 521–539; these read IFAS…FYVS, LSTA…IHGY, LNHH…HVAI, IAHH…GHMY, LNLQ…QHMY, AALY…IFLV, VIIS…LYVH, and FLVH…LILV. The [4Fe-4S] cluster site is built by Cys-563 and Cys-572. The next 2 membrane-spanning stretches (helical) occupy residues 579 to 600 and 647 to 669; these read AFYL…YWHW and LSVW…MFLI. Chlorophyll a contacts are provided by His-658, Met-666, and Tyr-674. Residue Trp-675 coordinates phylloquinone. Residues 708–728 form a helical membrane-spanning segment; that stretch reads FVGLIHFTVGYILTYAAFLIA.

The protein belongs to the PsaA/PsaB family. The PsaA/B heterodimer binds the P700 chlorophyll special pair and subsequent electron acceptors. PSI consists of a core antenna complex that captures photons, and an electron transfer chain that converts photonic excitation into a charge separation. The eukaryotic PSI reaction center is composed of at least 11 subunits. It depends on P700 is a chlorophyll a/chlorophyll a' dimer, A0 is one or more chlorophyll a, A1 is one or both phylloquinones and FX is a shared 4Fe-4S iron-sulfur center. as a cofactor.

It is found in the plastid. The protein resides in the chloroplast thylakoid membrane. It catalyses the reaction reduced [plastocyanin] + hnu + oxidized [2Fe-2S]-[ferredoxin] = oxidized [plastocyanin] + reduced [2Fe-2S]-[ferredoxin]. Its function is as follows. PsaA and PsaB bind P700, the primary electron donor of photosystem I (PSI), as well as the electron acceptors A0, A1 and FX. PSI is a plastocyanin/cytochrome c6-ferredoxin oxidoreductase, converting photonic excitation into a charge separation, which transfers an electron from the donor P700 chlorophyll pair to the spectroscopically characterized acceptors A0, A1, FX, FA and FB in turn. Oxidized P700 is reduced on the lumenal side of the thylakoid membrane by plastocyanin or cytochrome c6. The protein is Photosystem I P700 chlorophyll a apoprotein A2 of Bigelowiella natans (Pedinomonas minutissima).